Consider the following 233-residue polypeptide: Lysine exporter LysE (233 aa).

Topologically, residues 1–2 (ME) are cytoplasmic. The helical transmembrane segment at 3-23 (IFITGLLLGASLLLSIGPQNV) threads the bilayer. Topologically, residues 24–65 (LVIKQGIKREGLIAVLLVCLISDVFLFIAGTLGVDLLSNAAP) are periplasmic. Residues 66-86 (IVLDIMRWGGIAYLLWFAVMA) traverse the membrane as a helical segment. Over 87–143 (AKDAMTNKVEAPQIIEETEPTVPDDTPLGGSAVATDTRNRVRVEVSVDKQRVWVKPM) the chain is Cytoplasmic. The chain crosses the membrane as a helical span at residues 144-164 (LMAIVLTWLNPNAYLDAFVFI). The Periplasmic segment spans residues 165-176 (GGVGAQYGDTGR). Residues 177-197 (WIFAAGAFAASLIWFPLVGFG) traverse the membrane as a helical segment. Residues 198–212 (AAALSRPLSSPKVWR) are Cytoplasmic-facing. The chain crosses the membrane as a helical span at residues 213 to 233 (WINVVVAVVMTALAIKLMLMG).

The protein belongs to the LysE/ArgO transporter (TC 2.A.75) family.

Its subcellular location is the cell inner membrane. Its activity is regulated as follows. Transport process is modulated by three forces: the membrane potential, the chemical potential of lysine, and the proton gradient. Strongly inhibited by CCCP and valinomycin. Catalyzes the efflux of L-lysine. Can also export L-arginine and L-citrulline. The lysEG system prevents bacteriostasis due to elevated L-lysine or L-arginine concentrations that arise during growth in the presence of peptides or in mutants possessing a deregulated biosynthesis pathway. In vitro, can also export D-lysine during biotechnological production of D-amino acids. This Corynebacterium glutamicum (strain ATCC 13032 / DSM 20300 / JCM 1318 / BCRC 11384 / CCUG 27702 / LMG 3730 / NBRC 12168 / NCIMB 10025 / NRRL B-2784 / 534) protein is Lysine exporter LysE.